We begin with the raw amino-acid sequence, 182 residues long: Peptidoglycan recognition protein 1 (182 aa).

A signal peptide spans 1 to 18 (MLFACALLALLGLATSCS). Intrachain disulfides connect Cys-17/Cys-141, Cys-33/Cys-78, and Cys-54/Cys-60. Residues 39 to 167 (HPVRYVVISH…RDVQSTLSPG (129 aa)) form the N-acetylmuramoyl-L-alanine amidase domain.

The protein belongs to the N-acetylmuramoyl-L-alanine amidase 2 family. Homodimer; disulfide-linked. Interacts with HSPA1A; this interaction forms a cytotoxic complex that is released by lymphokine-activated killer cells. Interacts with HSPBP1; this interaction blocks the cytotoxic activity of the PGLYRP1-HSPA1A complex. As to expression, strongly expressed in spleen and lung. Also detected in brain and thymus. In the lung, expressed in the intraalveolar space, in the brain, expressed in the Purkinje cells of the cerebellum and in certain layers of neurons in the hippocampus. Also detected in cells filling the space within the intestinal villus.

It localises to the cytoplasm. The protein localises to the secreted. Innate immunity protein that plays several important functions in antimicrobial and antitumor defense systems. Acts as a pattern receptor that binds to murein peptidoglycans (PGN) of Gram-positive bacteria and thus provides bactericidal activity. Forms an equimolar complex with heat shock protein HSPA1A and induces programmed cell death through apoptosis and necroptosis in tumor cell lines by activating the TNFR1 receptor on the target cell membrane. In addition, acts in complex with the Ca(2+)-binding protein S100A4 as a chemoattractant able to induce lymphocyte movement. Mechanistically, this complex acts as a ligand of the chemotactic receptors CCR5 and CXCR3 which are present on the cells of the immune system. Also promotes the activation of lymphocytes that become able to kill virus-infected cells as well as tumor cells by modulating the spectrum of their target-cell specificity. Induction of cytotoxicity on monocyte surface requires interaction with TREM1 receptor. The polypeptide is Peptidoglycan recognition protein 1 (Pglyrp1) (Mus musculus (Mouse)).